A 315-amino-acid chain; its full sequence is Phosphomutase-like protein 3 (315 aa).

Residues 1–19 (MQQFLTLGALWTLFNVATT) form the signal peptide. His77 functions as the Tele-phosphohistidine intermediate in the catalytic mechanism. Residues Asn88 and Asn154 are each glycosylated (N-linked (GlcNAc...) asparagine). Glu173 functions as the Proton donor/acceptor in the catalytic mechanism. A glycan (N-linked (GlcNAc...) asparagine) is linked at Asn185. A lipid anchor (GPI-anchor amidated asparagine) is attached at Asn286. Residues 287–315 (DAWDTFKDWCPNPPASISGTATSTATGSA) constitute a propeptide, removed in mature form.

Belongs to the phosphoglycerate mutase family.

Its subcellular location is the cell membrane. The sequence is that of Phosphomutase-like protein 3 (PGA12) from Candida albicans (strain SC5314 / ATCC MYA-2876) (Yeast).